The following is a 448-amino-acid chain: Fibulin-5 (448 aa).

Residues methionine 1 to alanine 23 form the signal peptide. The EGF-like 1; calcium-binding domain occupies aspartate 42 to asparagine 82. Cystine bridges form between cysteine 46–cysteine 59, cysteine 53–cysteine 68, cysteine 131–cysteine 144, cysteine 138–cysteine 153, cysteine 155–cysteine 166, cysteine 172–cysteine 181, cysteine 177–cysteine 190, cysteine 192–cysteine 205, cysteine 211–cysteine 221, cysteine 217–cysteine 230, cysteine 232–cysteine 245, cysteine 251–cysteine 262, cysteine 258–cysteine 271, cysteine 273–cysteine 286, cysteine 292–cysteine 305, cysteine 299–cysteine 314, and cysteine 320–cysteine 332. The Cell attachment site motif lies at arginine 54–aspartate 56. The 41-residue stretch at aspartate 127–leucine 167 folds into the EGF-like 2; calcium-binding domain. Positions aspartate 168–glutamine 206 constitute an EGF-like 3; calcium-binding domain. Positions aspartate 207 to serine 246 constitute an EGF-like 4; calcium-binding domain. An interaction with LOXL1 region spans residues cysteine 245 to phenylalanine 448. The region spanning aspartate 247–glutamine 287 is the EGF-like 5; calcium-binding domain. Residues asparagine 283 and asparagine 296 are each glycosylated (N-linked (GlcNAc...) asparagine). An EGF-like 6; calcium-binding domain is found at aspartate 288–methionine 333.

It belongs to the fibulin family. Homodimer. Monomer, homodimerizes in presence of Ca(2+). Interacts with ELN. Interacts (via N-terminus) with the integrins ITGAV/ITGB3, ITGAV/ITGB5 and ITGA9/ITGB1. Interacts with FBN1 (via N-terminal domain). Forms a ternary complex with ELN and FBN1. Interacts with EFEMP2 with moderate affinity. Interacts with LOXL1. In terms of processing, N-glycosylated.

It is found in the secreted. It localises to the extracellular space. The protein localises to the extracellular matrix. Functionally, essential for elastic fiber formation, is involved in the assembly of continuous elastin (ELN) polymer and promotes the interaction of microfibrils and ELN. Stabilizes and organizes elastic fibers in the skin, lung and vasculature. Promotes adhesion of endothelial cells through interaction of integrins and the RGD motif. Vascular ligand for integrin receptors which may play a role in vascular development and remodeling. May act as an adapter that mediates the interaction between FBN1 and ELN. The protein is Fibulin-5 (Fbln5) of Mus musculus (Mouse).